A 306-amino-acid chain; its full sequence is Tryptophan 2,3-dioxygenase (306 aa).

The tract at residues 1–33 (MQPPGDDAAPRCPFAGAHAPDAPHVPEAAGDDA) is disordered. Residues 75 to 79 (FIIQH), Tyr137, and Arg141 each bind substrate. His264 contributes to the heme binding site. Thr278 serves as a coordination point for substrate.

This sequence belongs to the tryptophan 2,3-dioxygenase family. Homotetramer. Heme serves as cofactor.

The enzyme catalyses L-tryptophan + O2 = N-formyl-L-kynurenine. It functions in the pathway amino-acid degradation; L-tryptophan degradation via kynurenine pathway; L-kynurenine from L-tryptophan: step 1/2. Its function is as follows. Heme-dependent dioxygenase that catalyzes the oxidative cleavage of the L-tryptophan (L-Trp) pyrrole ring and converts L-tryptophan to N-formyl-L-kynurenine. Catalyzes the oxidative cleavage of the indole moiety. The chain is Tryptophan 2,3-dioxygenase from Burkholderia pseudomallei (strain 1106a).